We begin with the raw amino-acid sequence, 61 residues long: Small ribosomal subunit protein uS14B (61 aa).

Zn(2+) contacts are provided by Cys-24, Cys-27, Cys-40, and Cys-43.

This sequence belongs to the universal ribosomal protein uS14 family. Zinc-binding uS14 subfamily. In terms of assembly, part of the 30S ribosomal subunit. Contacts proteins S3 and S10. Requires Zn(2+) as cofactor.

Its function is as follows. Binds 16S rRNA, required for the assembly of 30S particles and may also be responsible for determining the conformation of the 16S rRNA at the A site. In Myxococcus xanthus (strain DK1622), this protein is Small ribosomal subunit protein uS14B.